The following is a 368-amino-acid chain: G-protein coupled receptor 183-A (368 aa).

Topologically, residues 1 to 27 (METTSANFTQNDSNVCTNLYNHRGWAQ) are extracellular. Asn7 and Asn11 each carry an N-linked (GlcNAc...) asparagine glycan. The helical transmembrane segment at 28-53 (YFLPAMYSLICIVGLLGNVLALHVIW) threads the bilayer. Over 54-73 (PNLKKINSTTLYSANLVVSD) the chain is Cytoplasmic. Residues 74–91 (ILFSLALPLRVVYYARGF) traverse the membrane as a helical segment. Topologically, residues 92-101 (DWPMGEGLCK) are extracellular. Cys100 and Cys178 are oxidised to a cystine. The chain crosses the membrane as a helical span at residues 102–123 (AVALLFYINMYAGVNFMTCLSV). Residues 124 to 145 (DRFIAVVLPLRFSRFRKVQKVR) lie on the Cytoplasmic side of the membrane. The chain crosses the membrane as a helical span at residues 146–164 (YICGVVWVVVLMQTLPLLS). Over 165-189 (MPMTNIEQSGHITCMEYPNFEKIDN) the chain is Extracellular. The helical transmembrane segment at 190–212 (LPVMLIGAVVLGFGIPVITILVC) threads the bilayer. The Cytoplasmic segment spans residues 213–238 (YTALCLKLRHLAKSNKLTEKSGRSSK). The chain crosses the membrane as a helical span at residues 239-262 (AIGVICTVILVFVVCYSPYHVDLL). Residues 263 to 282 (QYMIKKLRYDPDCSELHKFQ) lie on the Extracellular side of the membrane. Residues 283–307 (ISLHITVCFMNLNSCLDPFIYFFAC) traverse the membrane as a helical segment. Residues 308–368 (KGYKKKVLKL…SSVLLNSLEQ (61 aa)) are Cytoplasmic-facing.

The protein belongs to the G-protein coupled receptor 1 family.

The protein localises to the cell membrane. Its function is as follows. G-protein coupled receptor expressed in lymphocytes that acts as a chemotactic receptor for B-cells, T-cells, splenic dendritic cells, monocytes/macrophages and astrocytes. Receptor for oxysterol 7-alpha,25-dihydroxycholesterol (7-alpha,25-OHC) and other related oxysterols. Mediates cell positioning and movement of a number of cells by binding the 7-alpha,25-OHC ligand that forms a chemotactic gradient. Binding of 7-alpha,25-OHC mediates the correct localization of B-cells during humoral immune responses. The polypeptide is G-protein coupled receptor 183-A (gpr183a) (Danio rerio (Zebrafish)).